We begin with the raw amino-acid sequence, 1138 residues long: Serine/threonine/tyrosine-interacting-like protein 2 (1138 aa).

The disordered stretch occupies residues 1–20 (MATGGDAEEEQVVPNEEDEA). Residues 132–280 (NEVDEVWPNV…LRELNEKLME (149 aa)) enclose the Tyrosine-protein phosphatase domain. Phosphoserine is present on serine 291. 8 disordered regions span residues 309 to 336 (EEEDDATSHLSGSSLGKASQVSKPVTLI), 348 to 473 (EWRK…TWDM), 486 to 515 (ARKYRSKSKREELDGDCSEAGGRVREDDEE), 552 to 575 (KKDSEAGDGGSEHGTEEAAAGEKN), 592 to 618 (QKKVGSENKEEVVEMSKGEDTVLAKKR), 660 to 694 (AAPSVSADGDTASVLSTQSHRSHASNMPATPLPNL), 761 to 800 (SGCLPPPSQGRPSSDVQSVLSSTSSLTSRAEGSGNKVRGT), and 850 to 1117 (FKKK…DEAI). Over residues 316 to 331 (SHLSGSSLGKASQVSK) the composition is skewed to polar residues. A Phosphoserine modification is found at serine 373. A compositionally biased stretch (acidic residues) spans 376 to 385 (DGDDCEDEDV). Residues 386 to 409 (ERIIQEWQSRNERYQAKGREQWNR) show a composition bias toward basic and acidic residues. A Phosphothreonine modification is found at threonine 427. Phosphoserine occurs at positions 503 and 555. 2 stretches are compositionally biased toward basic and acidic residues: residues 552 to 567 (KKDSEAGDGGSEHGTE) and 595 to 614 (VGSENKEEVVEMSKGEDTVL). A compositionally biased stretch (polar residues) spans 672-687 (SVLSTQSHRSHASNMP). Low complexity predominate over residues 773-788 (SSDVQSVLSSTSSLTS). A compositionally biased stretch (acidic residues) spans 858-871 (DEDMSVGDRDEDTD). Serine 862 is modified (phosphoserine). Residues 878–897 (RYSSRSNSQKPETDASSSLA) are compositionally biased toward polar residues. Residue serine 929 is modified to Phosphoserine. A compositionally biased stretch (low complexity) spans 936 to 947 (SGSSRGRYTRSS). Basic and acidic residues predominate over residues 965–977 (RSQEQDTSFHEAN). Phosphoserine is present on serine 966. Positions 980–992 (TVRNTSRFSSSTT) are enriched in polar residues. The residue at position 1016 (serine 1016) is a Phosphoserine. 2 stretches are compositionally biased toward basic and acidic residues: residues 1035–1059 (PEPRRPNWTRPRDWEDVEESSKSDF) and 1074–1091 (RSEEEGEKERTENREEGR). Over residues 1095–1106 (GRQSQYRRSTNQ) the composition is skewed to polar residues. The segment covering 1107-1116 (QEEEEMDDEA) has biased composition (acidic residues).

It belongs to the protein-tyrosine phosphatase family. Non-receptor class dual specificity subfamily.

The protein resides in the cytoplasm. It is found in the myofibril. It localises to the sarcomere. May be required for myofiber maturation. In Mus musculus (Mouse), this protein is Serine/threonine/tyrosine-interacting-like protein 2 (Styxl2).